The following is a 150-amino-acid chain: Large ribosomal subunit protein bL9 (150 aa).

The protein belongs to the bacterial ribosomal protein bL9 family.

Binds to the 23S rRNA. The sequence is that of Large ribosomal subunit protein bL9 from Acidovorax ebreus (strain TPSY) (Diaphorobacter sp. (strain TPSY)).